The following is a 119-amino-acid chain: Large ribosomal subunit protein uL24 (119 aa).

Belongs to the universal ribosomal protein uL24 family. Part of the 50S ribosomal subunit.

Its function is as follows. One of two assembly initiator proteins, it binds directly to the 5'-end of the 23S rRNA, where it nucleates assembly of the 50S subunit. Functionally, located at the polypeptide exit tunnel on the outside of the subunit. The sequence is that of Large ribosomal subunit protein uL24 from Methanococcus maripaludis (strain DSM 14266 / JCM 13030 / NBRC 101832 / S2 / LL).